A 274-amino-acid polypeptide reads, in one-letter code: Pyrroline-5-carboxylate reductase 3 (274 aa).

A2 carries the N-acetylalanine modification.

Belongs to the pyrroline-5-carboxylate reductase family. Homodecamer; composed of 5 homodimers.

The protein localises to the cytoplasm. The enzyme catalyses L-proline + NADP(+) = (S)-1-pyrroline-5-carboxylate + NADPH + 2 H(+). The catalysed reaction is L-proline + NAD(+) = (S)-1-pyrroline-5-carboxylate + NADH + 2 H(+). It participates in amino-acid biosynthesis; L-proline biosynthesis; L-proline from L-glutamate 5-semialdehyde: step 1/1. Oxidoreductase that catalyzes the last step in proline biosynthesis, which corresponds to the reduction of pyrroline-5-carboxylate (P5C) to L-proline using NAD(P)H. Proline is synthesized from either glutamate or ornithine; both are converted to P5C, and then to proline via pyrroline-5-carboxylate reductases (PYCRs). PYCR3 is exclusively linked to the biosynthesis of proline from ornithine. The polypeptide is Pyrroline-5-carboxylate reductase 3 (Macaca fascicularis (Crab-eating macaque)).